A 275-amino-acid polypeptide reads, in one-letter code: Ribosomal RNA small subunit methyltransferase A (275 aa).

S-adenosyl-L-methionine contacts are provided by Asn19, Leu21, Gly46, Glu71, Asp94, and Asn117.

It belongs to the class I-like SAM-binding methyltransferase superfamily. rRNA adenine N(6)-methyltransferase family. RsmA subfamily.

Its subcellular location is the cytoplasm. It catalyses the reaction adenosine(1518)/adenosine(1519) in 16S rRNA + 4 S-adenosyl-L-methionine = N(6)-dimethyladenosine(1518)/N(6)-dimethyladenosine(1519) in 16S rRNA + 4 S-adenosyl-L-homocysteine + 4 H(+). Its function is as follows. Specifically dimethylates two adjacent adenosines (A1518 and A1519) in the loop of a conserved hairpin near the 3'-end of 16S rRNA in the 30S particle. May play a critical role in biogenesis of 30S subunits. The protein is Ribosomal RNA small subunit methyltransferase A of Burkholderia thailandensis (strain ATCC 700388 / DSM 13276 / CCUG 48851 / CIP 106301 / E264).